The following is a 269-amino-acid chain: Protein CURLY FLAG LEAF 1 (269 aa).

The segment at 17-44 (SLNGGGGGGGGRRRGRRAAAAEGSDDSE) is disordered. Positions 47–52 (TVELNS) match the EAR motif. Residues 54–88 (VALPYHWEQCLDIRTGQVYYINWEDGTRTTIDPRS) enclose the WW domain. Disordered stretches follow at residues 83–133 (TIDP…SGYT) and 174–218 (GDDE…SGAG). Composition is skewed to low complexity over residues 87–106 (RSSS…SSSR), 121–133 (AAAA…SGYT), and 180–202 (SSSS…AVSS). The segment covering 203-212 (TLSSFSPTDE) has biased composition (polar residues).

In terms of assembly, binds to HDG1.

Functionally, negatively regulates the cuticle development probably by interacting with the HD-ZIP IV transcription factor HDG1. The polypeptide is Protein CURLY FLAG LEAF 1 (Oryza sativa subsp. indica (Rice)).